The sequence spans 474 residues: tRNA modification GTPase MnmE (474 aa).

Residues Arg-25, Glu-82, and Lys-123 each coordinate (6S)-5-formyl-5,6,7,8-tetrahydrofolate. The 168-residue stretch at 219–386 folds into the TrmE-type G domain; that stretch reads GIKVVIAGKP…LKKHLYDSAM (168 aa). Asn-229 serves as a coordination point for K(+). GTP is bound by residues 229 to 234, 248 to 254, and 273 to 276; these read NAGKSS, SNISGTT, and DTAG. Ser-233 contributes to the Mg(2+) binding site. Positions 248, 250, and 253 each coordinate K(+). Thr-254 provides a ligand contact to Mg(2+). Lys-474 lines the (6S)-5-formyl-5,6,7,8-tetrahydrofolate pocket.

Belongs to the TRAFAC class TrmE-Era-EngA-EngB-Septin-like GTPase superfamily. TrmE GTPase family. Homodimer. Heterotetramer of two MnmE and two MnmG subunits. It depends on K(+) as a cofactor.

Its subcellular location is the cytoplasm. Functionally, exhibits a very high intrinsic GTPase hydrolysis rate. Involved in the addition of a carboxymethylaminomethyl (cmnm) group at the wobble position (U34) of certain tRNAs, forming tRNA-cmnm(5)s(2)U34. This Blochmanniella floridana protein is tRNA modification GTPase MnmE.